The following is a 317-amino-acid chain: 4-diphosphocytidyl-2-C-methyl-D-erythritol kinase (317 aa).

Residue K11 is part of the active site. 99 to 109 (PVAAGLAGGST) contacts ATP. D141 is an active-site residue.

This sequence belongs to the GHMP kinase family. IspE subfamily.

It carries out the reaction 4-CDP-2-C-methyl-D-erythritol + ATP = 4-CDP-2-C-methyl-D-erythritol 2-phosphate + ADP + H(+). It participates in isoprenoid biosynthesis; isopentenyl diphosphate biosynthesis via DXP pathway; isopentenyl diphosphate from 1-deoxy-D-xylulose 5-phosphate: step 3/6. Catalyzes the phosphorylation of the position 2 hydroxy group of 4-diphosphocytidyl-2C-methyl-D-erythritol. This Trichormus variabilis (strain ATCC 29413 / PCC 7937) (Anabaena variabilis) protein is 4-diphosphocytidyl-2-C-methyl-D-erythritol kinase.